We begin with the raw amino-acid sequence, 96 residues long: Aspartyl/glutamyl-tRNA(Asn/Gln) amidotransferase subunit C (96 aa).

Belongs to the GatC family. As to quaternary structure, heterotrimer of A, B and C subunits.

It carries out the reaction L-glutamyl-tRNA(Gln) + L-glutamine + ATP + H2O = L-glutaminyl-tRNA(Gln) + L-glutamate + ADP + phosphate + H(+). The catalysed reaction is L-aspartyl-tRNA(Asn) + L-glutamine + ATP + H2O = L-asparaginyl-tRNA(Asn) + L-glutamate + ADP + phosphate + 2 H(+). Allows the formation of correctly charged Asn-tRNA(Asn) or Gln-tRNA(Gln) through the transamidation of misacylated Asp-tRNA(Asn) or Glu-tRNA(Gln) in organisms which lack either or both of asparaginyl-tRNA or glutaminyl-tRNA synthetases. The reaction takes place in the presence of glutamine and ATP through an activated phospho-Asp-tRNA(Asn) or phospho-Glu-tRNA(Gln). This Wolinella succinogenes (strain ATCC 29543 / DSM 1740 / CCUG 13145 / JCM 31913 / LMG 7466 / NCTC 11488 / FDC 602W) (Vibrio succinogenes) protein is Aspartyl/glutamyl-tRNA(Asn/Gln) amidotransferase subunit C.